The primary structure comprises 269 residues: Energy-coupling factor transporter ATP-binding protein EcfA1 (269 aa).

Residues Ile-8 to Asp-242 enclose the ABC transporter domain. Gly-42–Ser-49 serves as a coordination point for ATP.

This sequence belongs to the ABC transporter superfamily. Energy-coupling factor EcfA family. In terms of assembly, forms a stable energy-coupling factor (ECF) transporter complex composed of 2 membrane-embedded substrate-binding proteins (S component), 2 ATP-binding proteins (A component) and 2 transmembrane proteins (T component).

It localises to the cell membrane. ATP-binding (A) component of a common energy-coupling factor (ECF) ABC-transporter complex. Unlike classic ABC transporters this ECF transporter provides the energy necessary to transport a number of different substrates. The sequence is that of Energy-coupling factor transporter ATP-binding protein EcfA1 from Staphylococcus saprophyticus subsp. saprophyticus (strain ATCC 15305 / DSM 20229 / NCIMB 8711 / NCTC 7292 / S-41).